The chain runs to 874 residues: Translation initiation factor IF-2 (874 aa).

The tract at residues 1–289 (MKIKNAQLTK…KHYDEHSVQR (289 aa)) is disordered. The span at 31-48 (SSSEKPTTKVPEKVAKEK) shows a compositional bias: basic and acidic residues. Residues 81–104 (RSSFASEDSTIPSPVSVDTESTAF) show a composition bias toward polar residues. A compositionally biased stretch (low complexity) spans 105 to 118 (SPPVVEEVVSPLES). Composition is skewed to basic and acidic residues over residues 144-158 (PPKKEAELVVKKEPP) and 186-198 (PKKEDKPAPKERT). Over residues 199–211 (GTVQTKPQQSSEV) the composition is skewed to polar residues. Basic and acidic residues predominate over residues 228 to 260 (YRRDTSKRPGSDFRDRSKKDDSPKAFTGRDRYG). The span at 271–280 (RKKRVQKTKK) shows a compositional bias: basic residues. One can recognise a tr-type G domain in the interval 380–549 (IRPPIVAFMG…ALQAEVLELK (170 aa)). Residues 389–396 (GHVDHGKT) are G1. 389–396 (GHVDHGKT) lines the GTP pocket. The G2 stretch occupies residues 414–418 (AITQH). Residues 435–438 (DTPG) form a G3 region. Residues 435–439 (DTPGH) and 489–492 (NKCD) each bind GTP. The segment at 489–492 (NKCD) is G4. The segment at 525–527 (SAK) is G5.

It belongs to the TRAFAC class translation factor GTPase superfamily. Classic translation factor GTPase family. IF-2 subfamily.

It is found in the cytoplasm. Functionally, one of the essential components for the initiation of protein synthesis. Protects formylmethionyl-tRNA from spontaneous hydrolysis and promotes its binding to the 30S ribosomal subunits. Also involved in the hydrolysis of GTP during the formation of the 70S ribosomal complex. The polypeptide is Translation initiation factor IF-2 (Chlamydia abortus (strain DSM 27085 / S26/3) (Chlamydophila abortus)).